The sequence spans 521 residues: 2,3-bisphosphoglycerate-independent phosphoglycerate mutase 2 (521 aa).

Asp-20 and Ser-70 together coordinate Mn(2+). Residue Ser-70 is the Phosphoserine intermediate of the active site. Substrate contacts are provided by residues His-131, 161–162, Arg-193, Arg-199, 270–273, and Lys-343; these read RD and RPDR. Asp-410, His-414, Asp-451, His-452, and His-470 together coordinate Mn(2+).

It belongs to the BPG-independent phosphoglycerate mutase family. Requires Mn(2+) as cofactor.

The catalysed reaction is (2R)-2-phosphoglycerate = (2R)-3-phosphoglycerate. The protein operates within carbohydrate degradation; glycolysis; pyruvate from D-glyceraldehyde 3-phosphate: step 3/5. Functionally, catalyzes the interconversion of 2-phosphoglycerate and 3-phosphoglycerate. This chain is 2,3-bisphosphoglycerate-independent phosphoglycerate mutase 2, found in Methanosarcina acetivorans (strain ATCC 35395 / DSM 2834 / JCM 12185 / C2A).